The sequence spans 203 residues: Secreted phosphoprotein 24 (203 aa).

The N-terminal stretch at 1 to 23 (MEKMVMKMLVIFVFGMNHWTCTG) is a signal peptide. Cystine bridges form between C86/C97 and C110/C128. Position 90 is a phosphoserine (S90). Phosphoserine is present on residues S138, S139, S166, and S175. Positions 155–174 (NSHLLGLTPDRSRGEPLYER) are disordered. The span at 164 to 174 (DRSRGEPLYER) shows a compositional bias: basic and acidic residues.

This sequence belongs to the SPP2 family. In terms of processing, multiply phosphorylated at serine residues. Post-translationally, phosphorylation sites are present in the extracellular medium.

Its subcellular location is the secreted. Its function is as follows. Could coordinate an aspect of bone turnover. The polypeptide is Secreted phosphoprotein 24 (SPP2) (Ovis aries (Sheep)).